We begin with the raw amino-acid sequence, 504 residues long: Anaerobic nitric oxide reductase transcription regulator NorR (504 aa).

4-aspartylphosphate is present on D57. In terms of domain architecture, Sigma-54 factor interaction spans 187–416 (MIGLSPGMTQ…LEHAIHRAVV (230 aa)). ATP-binding positions include 215–222 (GETGTGKE) and 278–287 (ADNGTLFLDE). Residues 479-498 (WAASARMLETDVANLHRLAK) constitute a DNA-binding region (H-T-H motif).

The protein operates within nitrogen metabolism; nitric oxide reduction. Its function is as follows. Required for the expression of anaerobic nitric oxide (NO) reductase, acts as a transcriptional activator for at least the norVW operon. Activation also requires sigma-54. This is Anaerobic nitric oxide reductase transcription regulator NorR from Escherichia fergusonii (strain ATCC 35469 / DSM 13698 / CCUG 18766 / IAM 14443 / JCM 21226 / LMG 7866 / NBRC 102419 / NCTC 12128 / CDC 0568-73).